Consider the following 364-residue polypeptide: Histidinol-phosphate aminotransferase 1 (364 aa).

K211 is subject to N6-(pyridoxal phosphate)lysine.

It belongs to the class-II pyridoxal-phosphate-dependent aminotransferase family. Histidinol-phosphate aminotransferase subfamily. As to quaternary structure, homodimer. Pyridoxal 5'-phosphate serves as cofactor.

It catalyses the reaction L-histidinol phosphate + 2-oxoglutarate = 3-(imidazol-4-yl)-2-oxopropyl phosphate + L-glutamate. The protein operates within amino-acid biosynthesis; L-histidine biosynthesis; L-histidine from 5-phospho-alpha-D-ribose 1-diphosphate: step 7/9. In Legionella pneumophila subsp. pneumophila (strain Philadelphia 1 / ATCC 33152 / DSM 7513), this protein is Histidinol-phosphate aminotransferase 1.